Reading from the N-terminus, the 663-residue chain is Beta-galactosidase YesZ (663 aa).

Arginine 107 is a binding site for substrate. Cysteine 111 is a binding site for Zn(2+). Asparagine 145 is a substrate binding site. Catalysis depends on glutamate 146, which acts as the Proton donor. Positions 154, 156, and 159 each coordinate Zn(2+). The Nucleophile role is filled by glutamate 297. 346–349 (EQPH) serves as a coordination point for substrate.

This sequence belongs to the glycosyl hydrolase 42 family. As to quaternary structure, homotrimer.

The enzyme catalyses Hydrolysis of terminal non-reducing beta-D-galactose residues in beta-D-galactosides.. Functionally, may play a role in the degradation of rhamnogalacturonan derived from plant cell walls. This Bacillus licheniformis (strain ATCC 14580 / DSM 13 / JCM 2505 / CCUG 7422 / NBRC 12200 / NCIMB 9375 / NCTC 10341 / NRRL NRS-1264 / Gibson 46) protein is Beta-galactosidase YesZ (yesZ).